An 833-amino-acid chain; its full sequence is Protein translocase subunit SecA (833 aa).

Residues Gln-87, 105-109 (GEGKT), and Asp-494 each bind ATP. Residues 789 to 816 (PAAVAYSGGEAEAGPAQPHREDPKVGRN) form a disordered region. The span at 806 to 815 (PHREDPKVGR) shows a compositional bias: basic and acidic residues. The Zn(2+) site is built by Cys-819, Cys-821, Cys-830, and Cys-831.

It belongs to the SecA family. In terms of assembly, monomer and homodimer. Part of the essential Sec protein translocation apparatus which comprises SecA, SecYEG and auxiliary proteins SecDF-YajC and YidC. The cofactor is Zn(2+).

The protein localises to the cell inner membrane. The protein resides in the cytoplasm. It catalyses the reaction ATP + H2O + cellular proteinSide 1 = ADP + phosphate + cellular proteinSide 2.. Its function is as follows. Part of the Sec protein translocase complex. Interacts with the SecYEG preprotein conducting channel. Has a central role in coupling the hydrolysis of ATP to the transfer of proteins into and across the cell membrane, serving as an ATP-driven molecular motor driving the stepwise translocation of polypeptide chains across the membrane. This Nitratidesulfovibrio vulgaris (strain DP4) (Desulfovibrio vulgaris) protein is Protein translocase subunit SecA.